A 154-amino-acid polypeptide reads, in one-letter code: 6,7-dimethyl-8-ribityllumazine synthase (154 aa).

Residues Phe-22, 56–58, and 80–82 contribute to the 5-amino-6-(D-ribitylamino)uracil site; these read AFE and AVI. Residue 85-86 participates in (2S)-2-hydroxy-3-oxobutyl phosphate binding; the sequence is ST. The Proton donor role is filled by His-88. Phe-113 contacts 5-amino-6-(D-ribitylamino)uracil. Arg-127 provides a ligand contact to (2S)-2-hydroxy-3-oxobutyl phosphate.

Belongs to the DMRL synthase family.

It carries out the reaction (2S)-2-hydroxy-3-oxobutyl phosphate + 5-amino-6-(D-ribitylamino)uracil = 6,7-dimethyl-8-(1-D-ribityl)lumazine + phosphate + 2 H2O + H(+). Its pathway is cofactor biosynthesis; riboflavin biosynthesis; riboflavin from 2-hydroxy-3-oxobutyl phosphate and 5-amino-6-(D-ribitylamino)uracil: step 1/2. In terms of biological role, catalyzes the formation of 6,7-dimethyl-8-ribityllumazine by condensation of 5-amino-6-(D-ribitylamino)uracil with 3,4-dihydroxy-2-butanone 4-phosphate. This is the penultimate step in the biosynthesis of riboflavin. This chain is 6,7-dimethyl-8-ribityllumazine synthase, found in Clostridium kluyveri (strain NBRC 12016).